We begin with the raw amino-acid sequence, 660 residues long: Zinc transporter ZIP4 (660 aa).

An N-terminal signal peptide occupies residues Met-1–Ala-22. Residues Arg-23–Tyr-337 lie on the Extracellular side of the membrane. 3 disulfide bridges follow: Cys-56/Cys-61, Cys-64/Cys-110, and Cys-160/Cys-195. Residues Asn-192 and Asn-219 are each glycosylated (N-linked (GlcNAc...) asparagine). Residues Gly-233 to Ser-273 form a disordered region. Positions Gly-236–Thr-267 are enriched in basic and acidic residues. A glycan (N-linked (GlcNAc...) asparagine) is linked at Asn-272. Cysteines 280 and 319 form a disulfide. The helical transmembrane segment at Leu-338–Leu-358 threads the bilayer. Residues Thr-359–Ser-376 are Cytoplasmic-facing. Residues Leu-377–Leu-397 form a helical membrane-spanning segment. Over His-398–Arg-420 the chain is Extracellular. A helical transmembrane segment spans residues Leu-421–Leu-441. At Leu-442 to Tyr-511 the chain is on the cytoplasmic side. The short motif at Leu-465–Leu-467 is the Essential for SLC39A4 endocytosis element. Residues Leu-512–Ala-531 traverse the membrane as a helical segment. Residues His-520, Asn-521, and Asp-524 each contribute to the Zn(2+) site. The Extracellular segment spans residues Phe-532–Gly-539. A helical transmembrane segment spans residues Leu-540–Leu-566. Zn(2+) contacts are provided by His-549, Glu-550, and His-553. Residues Ser-567 to Ala-571 are Cytoplasmic-facing. The helical transmembrane segment at Leu-572–Val-592 threads the bilayer. Residues Gly-593–Glu-599 are Extracellular-facing. A helical membrane pass occupies residues Ala-600 to Pro-620. Residues Ala-621–Pro-630 lie on the Cytoplasmic side of the membrane. Residues Trp-631 to Leu-651 form a helical membrane-spanning segment. Residues Ser-652 to Phe-660 are Extracellular-facing. Residue Asn-657 is glycosylated (N-linked (GlcNAc...) asparagine).

This sequence belongs to the ZIP transporter (TC 2.A.5) family. As to quaternary structure, homodimer. Homodimerization is mediated by the transmembrane domain. Post-translationally, the extracellular N-terminal ectodomain is cleaved when cells are Zn(2+) deficient, N-terminally cleaved SLC39A4 is then internalized faster. In terms of processing, under excess Zn(2+) conditions, SLC39A4 on the cell surface is rapidly endocytosed, ubiquitinated, and degraded. N-glycosylated. As to expression, highly expressed in the small intestine and embryonic visceral yolk sac. Weakly expressed in the stomach and liver.

The protein localises to the cell membrane. It localises to the recycling endosome membrane. It is found in the apical cell membrane. It carries out the reaction Zn(2+)(in) = Zn(2+)(out). In terms of biological role, selective transporter that mediates the uptake of Zn(2+). Plays an essential role for dietary zinc uptake from small intestine. The Zn(2+) uniporter activity is regulated by zinc availability. Also exhibits polyspecific binding and transport of Cu(2+), Cd(2+) and possibly Ni(2+) but at higher concentrations. The polypeptide is Zinc transporter ZIP4 (Slc39a4) (Mus musculus (Mouse)).